The following is a 208-amino-acid chain: Outer-membrane lipoprotein carrier protein (208 aa).

The N-terminal stretch at Met-1 to Ala-21 is a signal peptide.

It belongs to the LolA family. As to quaternary structure, monomer.

It is found in the periplasm. Functionally, participates in the translocation of lipoproteins from the inner membrane to the outer membrane. Only forms a complex with a lipoprotein if the residue after the N-terminal Cys is not an aspartate (The Asp acts as a targeting signal to indicate that the lipoprotein should stay in the inner membrane). This chain is Outer-membrane lipoprotein carrier protein, found in Methylococcus capsulatus (strain ATCC 33009 / NCIMB 11132 / Bath).